Consider the following 282-residue polypeptide: Putative dolichyldiphosphatase (282 aa).

2 helical membrane passes run 26–46 (LLCAWLALVPQALCVVYATLI) and 93–113 (MPSSHAQFVSFWAVALGLFLL). Residues 121-153 (QQQQQQQKQKQRERKKQVTNVKTTTTNGSGNGS) form a disordered region. Low complexity predominate over residues 138 to 148 (VTNVKTTTTNG). Helical transmembrane passes span 173–193 (WSFAHRFVASLGALVLAGAVA) and 207–227 (VLVGCGAGTLCAVAWFVVTHV).

The protein belongs to the dolichyldiphosphatase family.

Its subcellular location is the endoplasmic reticulum membrane. The enzyme catalyses a di-trans,poly-cis-dolichyl diphosphate + H2O = a di-trans,poly-cis-dolichyl phosphate + phosphate + H(+). The protein operates within protein modification; protein glycosylation. The chain is Putative dolichyldiphosphatase from Neurospora crassa (strain ATCC 24698 / 74-OR23-1A / CBS 708.71 / DSM 1257 / FGSC 987).